The chain runs to 521 residues: Glucose-1-phosphate adenylyltransferase small subunit, chloroplastic (521 aa).

The interval methionine 1–aspartate 24 is disordered. The N-terminal 72 residues, methionine 1–alanine 72, are a transit peptide targeting the chloroplast.

This sequence belongs to the bacterial/plant glucose-1-phosphate adenylyltransferase family. As to quaternary structure, heterotetramer.

The protein resides in the plastid. It localises to the chloroplast. It carries out the reaction alpha-D-glucose 1-phosphate + ATP + H(+) = ADP-alpha-D-glucose + diphosphate. Its pathway is glycan biosynthesis; starch biosynthesis. With respect to regulation, activated by 3'phosphoglycerate, inhibited by orthophosphate. Allosteric regulation. This protein plays a role in synthesis of starch. It catalyzes the synthesis of the activated glycosyl donor, ADP-glucose from Glc-1-P and ATP. The protein is Glucose-1-phosphate adenylyltransferase small subunit, chloroplastic of Solanum lycopersicum (Tomato).